The following is an 836-amino-acid chain: Serine/threonine-protein kinase 1 (836 aa).

Residues 1-12 show a composition bias toward basic residues; sequence MDHNSPKSRRSR. A disordered region spans residues 1-244; the sequence is MDHNSPKSRR…SLPDSITRED (244 aa). Basic and acidic residues predominate over residues 28–40; the sequence is SDSDSDQGRDRDK. 3 stretches are compositionally biased toward acidic residues: residues 64-75, 95-105, and 145-163; these read DGEGEEDDDDDS, DYDDDDGDESG, and EESSDEEDEEEDDDDDDGD. Residues 224-238 are compositionally biased toward polar residues; it reads MQQQNSKMSTTSLPD. In terms of domain architecture, Protein kinase spans 249 to 503; that stretch reads YEFLNELGKG…AAEMLKHKFV (255 aa). Residues 255–263 and lysine 278 contribute to the ATP site; that span reads LGKGSYGSV. Aspartate 371 acts as the Proton acceptor in catalysis. 3 disordered regions span residues 539-571, 600-640, and 760-780; these read LEDTSTLGPKSSEELGITVPSKPPQNSTEAPLT, EDET…DSWI, and TSSDPQSKKGRRGQNEMPLPP. The span at 562–571 shows a compositional bias: polar residues; the sequence is PQNSTEAPLT. Residues 606-618 are compositionally biased toward basic and acidic residues; that stretch reads SDSRSQLVREKES.

This sequence belongs to the protein kinase superfamily. STE Ser/Thr protein kinase family. STE20 subfamily. As to quaternary structure, interacts with MOB1A and MOB1B via its N-terminal region at the plasma membrane and in the nucleus. Binds to BIK1 to phosphorylate and stabilize it. Interacts with and phosphorylates RBOHD upon flagellin perception to activate it. It depends on Mn(2+) as a cofactor. Autophosphorylates. Mostly expressed in mature tissues of roots, shoots, hypocotyls, cotyledons, stems, leaves and flowers, as well as in the shoot apical meristem (SAM).

It localises to the cell membrane. It is found in the nucleus. The protein resides in the golgi apparatus. Its subcellular location is the trans-Golgi network. The protein localises to the early endosome. The catalysed reaction is L-seryl-[protein] + ATP = O-phospho-L-seryl-[protein] + ADP + H(+). It catalyses the reaction L-threonyl-[protein] + ATP = O-phospho-L-threonyl-[protein] + ADP + H(+). In terms of biological role, serine/threonine-protein kinase. Regulates organ size in coordination with MOB1A by modulating cell proliferation and cell expansion, possibly by facilitating cell cycle exit. Positive regulator of the pathogen-associated molecular pattern (PAMP, e.g. flg22)-triggered immunity (PTI) signaling by stabilizing BIK1 and activating RBOHD by phosphorylation to promote the extracellular reactive oxygen species (ROS) burst involved in defense responses to bacterial infection. The protein is Serine/threonine-protein kinase 1 of Arabidopsis thaliana (Mouse-ear cress).